We begin with the raw amino-acid sequence, 484 residues long: ATP synthase subunit beta (484 aa).

162–169 (GGAGVGKT) contributes to the ATP binding site.

This sequence belongs to the ATPase alpha/beta chains family. In terms of assembly, F-type ATPases have 2 components, CF(1) - the catalytic core - and CF(0) - the membrane proton channel. CF(1) has five subunits: alpha(3), beta(3), gamma(1), delta(1), epsilon(1). CF(0) has three main subunits: a(1), b(2) and c(9-12). The alpha and beta chains form an alternating ring which encloses part of the gamma chain. CF(1) is attached to CF(0) by a central stalk formed by the gamma and epsilon chains, while a peripheral stalk is formed by the delta and b chains.

It is found in the cell inner membrane. It catalyses the reaction ATP + H2O + 4 H(+)(in) = ADP + phosphate + 5 H(+)(out). Produces ATP from ADP in the presence of a proton gradient across the membrane. The catalytic sites are hosted primarily by the beta subunits. This is ATP synthase subunit beta from Agrobacterium fabrum (strain C58 / ATCC 33970) (Agrobacterium tumefaciens (strain C58)).